Reading from the N-terminus, the 586-residue chain is Tetratricopeptide repeat protein 39B (586 aa).

TPR repeat units lie at residues 292–325 (SIIL…QQEW), 483–516 (CLVQ…EKRV), and 524–557 (PFTF…YKDY).

Belongs to the TTC39 family.

Its function is as follows. May be involved in lipid metabolism. The chain is Tetratricopeptide repeat protein 39B (ttc39b) from Xenopus laevis (African clawed frog).